The primary structure comprises 728 residues: Protein Hook homolog 1 (728 aa).

Methionine 1 is subject to N-acetylmethionine. Residues 1 to 555 form a sufficient for interaction with microtubules region; sequence MEETQPPPQP…LKQKLEAHME (555 aa). A Calponin-homology (CH) domain is found at 12-128; the sequence is LPLCDSLMIW…RLLQLILGCA (117 aa). Coiled-coil stretches lie at residues 169-434 and 477-658; these read PNDA…RCSQ and LRLQ…AKFR. The sufficient for homodimerization, interaction wit HOOK2, HOOK3 and AP4M1 stretch occupies residues 169 to 444; that stretch reads PNDAVGELEQ…VQQDHLNQTD (276 aa). Serine 235 carries the post-translational modification Phosphoserine. Residues 481 to 512 are disordered; sequence QEGSENERIEELQEQLEQKHRKMNELETEQRL. The segment covering 503–512 has biased composition (basic and acidic residues); that stretch reads MNELETEQRL. The interval 657–728 is sufficient for interaction with AKTIP and VPS18; that stretch reads FRDYEEKLIV…SVKVPATTSD (72 aa). Threonine 699 carries the post-translational modification Phosphothreonine. Phosphoserine occurs at positions 719 and 727.

Belongs to the hook family. As to quaternary structure, self-associates. Component of the FTS/Hook/FHIP complex (FHF complex), composed of AKTIP/FTS, FHIP1B, and one or more members of the Hook family of proteins HOOK1, HOOK2, and HOOK3. Interacts directly with AKTIP/FTS, HOOK2 and HOOK3. Associates with several subunits of the homotypic vesicular sorting complex (the HOPS complex) including VPS16, VPS18, VPS39 and VPS41; these interactions may be indirect. Interacts with CCDC181. Interacts (via coiled-coil region) with RIMBP3 (via C-terminus). Interacts with LRGUK (via guanylate kinase-like domain). Interacts with microtubules. May interact with CLN3. Interacts with AP4M1; the interaction is direct, mediates the interaction between FTS-Hook-FHIP (FHF) complex and AP-4 and the perinuclear distribution of AP-4.

The protein resides in the cytoplasm. Its subcellular location is the cytoskeleton. Functionally, component of the FTS/Hook/FHIP complex (FHF complex). The FHF complex may function to promote vesicle trafficking and/or fusion via the homotypic vesicular protein sorting complex (the HOPS complex). FHF complex promotes the distribution of AP-4 complex to the perinuclear area of the cell. Required for spermatid differentiation. Probably involved in the positioning of the microtubules of the manchette and the flagellum in relation to the membrane skeleton. This Homo sapiens (Human) protein is Protein Hook homolog 1.